The primary structure comprises 162 residues: MLKITLIAACAENLCIGAGNAMPWHIPEDFAFFKAYTLGKPVIMGRKTWESLPVKPLPGRRNIVISRQADYCAAGAETAASLEAALALCAGAEEAVIMGGAQIYGQAMPLATDLRITEVDLSVEGDAFFPAIDRTHWKEAERTERRVSSKGTRYAFVHYLRY.

Positions 3–161 (KITLIAACAE…TRYAFVHYLR (159 aa)) constitute a DHFR domain. A substrate-binding site is contributed by 7-9 (IAA). NADP(+) contacts are provided by residues 8-9 (AA) and 16-21 (IGAGNA). Asp-29 is a substrate binding site. Position 45-48 (45-48 (GRKT)) interacts with NADP(+). Arg-60 is a binding site for substrate. NADP(+) is bound by residues 65–68 (ISRQ) and 98–103 (MGGAQI). Residue Thr-117 participates in substrate binding.

It belongs to the dihydrofolate reductase family.

The enzyme catalyses (6S)-5,6,7,8-tetrahydrofolate + NADP(+) = 7,8-dihydrofolate + NADPH + H(+). Its pathway is cofactor biosynthesis; tetrahydrofolate biosynthesis; 5,6,7,8-tetrahydrofolate from 7,8-dihydrofolate: step 1/1. Functionally, key enzyme in folate metabolism. Catalyzes an essential reaction for de novo glycine and purine synthesis, and for DNA precursor synthesis. The sequence is that of Dihydrofolate reductase (folA) from Neisseria meningitidis serogroup B (strain ATCC BAA-335 / MC58).